The sequence spans 540 residues: Putative F-box/LRR-repeat protein At5g41840 (540 aa).

The F-box domain maps to 13–61 (GDRISGLPDALICHILSFLPTKEAASTTVLAKRWKPLLAFVPNLNFDDS). LRR repeat units lie at residues 80-105 (FMSFVDSVLALQAKTKTPLKRFHVKC), 137-165 (RNYCENSSFYSLPSKIFVSKTLVRLKIQF), 189-214 (YFKIETSMLNKLLSGCHALEELVLAN), 217-242 (WADSSEDEACHVSVSIPTLKRLNFCR), 254-282 (YEDYDEENINEGVSLSFDNPNLVYLEYSD), 329-360 (ILYLSDDTLEVLSCCRERIPVFDNLLELTIKT), and 361-386 (TPYVGWKSLPPLLKSCPSLETLVFEG).

The protein is Putative F-box/LRR-repeat protein At5g41840 of Arabidopsis thaliana (Mouse-ear cress).